The chain runs to 243 residues: Phosphoribosylaminoimidazole-succinocarboxamide synthase (243 aa).

This sequence belongs to the SAICAR synthetase family.

The catalysed reaction is 5-amino-1-(5-phospho-D-ribosyl)imidazole-4-carboxylate + L-aspartate + ATP = (2S)-2-[5-amino-1-(5-phospho-beta-D-ribosyl)imidazole-4-carboxamido]succinate + ADP + phosphate + 2 H(+). It functions in the pathway purine metabolism; IMP biosynthesis via de novo pathway; 5-amino-1-(5-phospho-D-ribosyl)imidazole-4-carboxamide from 5-amino-1-(5-phospho-D-ribosyl)imidazole-4-carboxylate: step 1/2. In Thermosynechococcus vestitus (strain NIES-2133 / IAM M-273 / BP-1), this protein is Phosphoribosylaminoimidazole-succinocarboxamide synthase.